An 878-amino-acid polypeptide reads, in one-letter code: Aconitate hydratase A (878 aa).

3 residues coordinate [4Fe-4S] cluster: Cys426, Cys492, and Cys495.

Belongs to the aconitase/IPM isomerase family. Monomer. [4Fe-4S] cluster serves as cofactor.

The catalysed reaction is citrate = D-threo-isocitrate. It catalyses the reaction (2S,3R)-3-hydroxybutane-1,2,3-tricarboxylate = 2-methyl-cis-aconitate + H2O. Its pathway is carbohydrate metabolism; tricarboxylic acid cycle; isocitrate from oxaloacetate: step 2/2. It participates in organic acid metabolism; propanoate degradation. In terms of biological role, involved in the catabolism of short chain fatty acids (SCFA) via the tricarboxylic acid (TCA)(acetyl degradation route) and probably the 2-methylcitrate cycle I (propionate degradation route). Catalyzes the reversible isomerization of citrate to isocitrate via cis-aconitate. Could catalyze the hydration of 2-methyl-cis-aconitate to yield (2R,3S)-2-methylisocitrate. The apo form of AcnA functions as a RNA-binding regulatory protein. The protein is Aconitate hydratase A (acnA) of Rickettsia felis (strain ATCC VR-1525 / URRWXCal2) (Rickettsia azadi).